The chain runs to 59 residues: Large ribosomal subunit protein uL30 (59 aa).

It belongs to the universal ribosomal protein uL30 family. In terms of assembly, part of the 50S ribosomal subunit.

In Citrobacter koseri (strain ATCC BAA-895 / CDC 4225-83 / SGSC4696), this protein is Large ribosomal subunit protein uL30.